We begin with the raw amino-acid sequence, 491 residues long: Monodehydroascorbate reductase 5, chlorplastic (491 aa).

Residues 1-42 (MASTAAAASSQGCISWALRQRGLGGGGARAVPVLPRRRFCVS) constitute a chloroplast transit peptide. Residues 61-64 (GGNA), E88, R95, K100, and 194-195 (RD) each bind FAD. Residues 217–223 (GGYIGME), E241, R247, and G306 contribute to the NAD(+) site. 219–223 (YIGME) lines the NADP(+) pocket. 2 residues coordinate NADP(+): R247 and G306. D344 provides a ligand contact to FAD. An NAD(+)-binding site is contributed by 360-361 (EH). 360 to 361 (EH) contributes to the NADP(+) binding site. V362 lines the FAD pocket. R366 lines the L-ascorbate pocket. Y391 provides a ligand contact to FAD. An NAD(+)-binding site is contributed by Y391. NADP(+) is bound at residue Y391. Residue R393 participates in L-ascorbate binding.

The protein belongs to the FAD-dependent oxidoreductase family. FAD is required as a cofactor.

It is found in the plastid. Its subcellular location is the chloroplast. The catalysed reaction is 2 monodehydro-L-ascorbate radical + NADH + H(+) = 2 L-ascorbate + NAD(+). Catalyzes the conversion of monodehydroascorbate to ascorbate, oxidizing NADH in the process. Ascorbate is a major antioxidant against reactive oxygen species (ROS) and nitric oxide (NO). The polypeptide is Monodehydroascorbate reductase 5, chlorplastic (Oryza sativa subsp. japonica (Rice)).